Consider the following 338-residue polypeptide: MVLGVVGISYREAALKEREAVINILKDFEANSFFSQHFFGDDGSFVLLLTCHRAEIYYFSKSNRHIQSKLLSRISSLGARPYCYQGLACFTHLFTVTSGMDSLISGETEIQGQVKRAYIKAKTDRDLPFALHFLFQKALKEGKDFRSQVSLSHPVVTIESVVEETLDLHGKSTKDKLLFIGYSEINRKIAKGLSAKGYRNLIFCSRKNISIPYDTVARSQLSFREPYDVIFFGSSESAKDFSGLSLESLASIPSRVIFDFNVPRTFTLAESPKDIICLDMDFISERVQKKLQISKQCTNKEKPFLALAARKQWEVYEKKSSHIPSSQVRASRPKLLIL.

Substrate-binding positions include 50 to 53 (TCHR), S102, 107 to 109 (ETE), and Q113. C51 (nucleophile) is an active-site residue. Residue 181–186 (GYSEIN) participates in NADP(+) binding.

It belongs to the glutamyl-tRNA reductase family. In terms of assembly, homodimer.

It carries out the reaction (S)-4-amino-5-oxopentanoate + tRNA(Glu) + NADP(+) = L-glutamyl-tRNA(Glu) + NADPH + H(+). Its pathway is porphyrin-containing compound metabolism; protoporphyrin-IX biosynthesis; 5-aminolevulinate from L-glutamyl-tRNA(Glu): step 1/2. Its function is as follows. Catalyzes the NADPH-dependent reduction of glutamyl-tRNA(Glu) to glutamate 1-semialdehyde (GSA). In Chlamydia abortus (strain DSM 27085 / S26/3) (Chlamydophila abortus), this protein is Glutamyl-tRNA reductase.